A 66-amino-acid polypeptide reads, in one-letter code: Large ribosomal subunit protein bL33 (66 aa).

The protein belongs to the bacterial ribosomal protein bL33 family.

This Synechococcus sp. (strain CC9902) protein is Large ribosomal subunit protein bL33.